Reading from the N-terminus, the 395-residue chain is NAD(P)H-quinone oxidoreductase subunit H (395 aa).

Belongs to the complex I 49 kDa subunit family. In terms of assembly, NDH-1 can be composed of about 15 different subunits; different subcomplexes with different compositions have been identified which probably have different functions.

It localises to the cellular thylakoid membrane. It carries out the reaction a plastoquinone + NADH + (n+1) H(+)(in) = a plastoquinol + NAD(+) + n H(+)(out). It catalyses the reaction a plastoquinone + NADPH + (n+1) H(+)(in) = a plastoquinol + NADP(+) + n H(+)(out). NDH-1 shuttles electrons from an unknown electron donor, via FMN and iron-sulfur (Fe-S) centers, to quinones in the respiratory and/or the photosynthetic chain. The immediate electron acceptor for the enzyme in this species is believed to be plastoquinone. Couples the redox reaction to proton translocation, and thus conserves the redox energy in a proton gradient. Cyanobacterial NDH-1 also plays a role in inorganic carbon-concentration. This Prochlorococcus marinus (strain MIT 9301) protein is NAD(P)H-quinone oxidoreductase subunit H.